The primary structure comprises 144 residues: Dynein light chain Tctex-type protein 2B (144 aa).

Belongs to the dynein light chain Tctex-type family. In terms of assembly, light chain of the cytoplasmic dynein complex 2, a multisubunit complex composed at least of eleven different proteins. The cytoplasmic dynein 2 complex consists of two catalytic heavy chains (HCs) and a number of non-catalytic subunits presented by intermediate chains (ICs), light intermediate chains (LICs) and light chains (LCs). Among them, a heavy chain (DYNC2H1), two intermediate chains (DYNC2I2 and DYNC2I1), a light intermediate chain (DYNC2LI1), and a light chain (DYNLT2B) are unique to the dynein-2 complex, but a subset of the light chains are also shared by dynein-1 and dynein-2 complexes. The dimer DYNLT2B-DYNLT1/DYNLT3 interacts with DYNC2I1; this interaction is crucial for retrograde trafficking of ciliary proteins.

The protein resides in the dynein axonemal particle. Acts as one of several non-catalytic accessory components of the cytoplasmic dynein 2 complex (dynein-2 complex), a motor protein complex that drives the movement of cargos along microtubules within cilia and flagella in concert with the intraflagellar transport (IFT) system. Required for proper retrograde ciliary transport. This is Dynein light chain Tctex-type protein 2B (Dynlt2b) from Mus musculus (Mouse).